We begin with the raw amino-acid sequence, 98 residues long: NADH-ubiquinone oxidoreductase chain 4L (98 aa).

The next 3 membrane-spanning stretches (helical) occupy residues 1 to 21, 28 to 48, and 59 to 79; these read MTSI…GVLM, STLL…SLLI, and APLI…ALLV.

The protein belongs to the complex I subunit 4L family. In terms of assembly, core subunit of respiratory chain NADH dehydrogenase (Complex I) which is composed of 45 different subunits.

The protein resides in the mitochondrion inner membrane. It carries out the reaction a ubiquinone + NADH + 5 H(+)(in) = a ubiquinol + NAD(+) + 4 H(+)(out). Core subunit of the mitochondrial membrane respiratory chain NADH dehydrogenase (Complex I) which catalyzes electron transfer from NADH through the respiratory chain, using ubiquinone as an electron acceptor. Part of the enzyme membrane arm which is embedded in the lipid bilayer and involved in proton translocation. The chain is NADH-ubiquinone oxidoreductase chain 4L (MT-ND4L) from Phascolarctos cinereus (Koala).